We begin with the raw amino-acid sequence, 339 residues long: Outer membrane protein assembly factor BamC (339 aa).

A signal peptide spans 1–19 (MKFSRQLVLGSLAVLVLSA). A lipid anchor (N-palmitoyl cysteine) is attached at Cys-20. Cys-20 is lipidated: S-diacylglycerol cysteine.

It belongs to the BamC family. In terms of assembly, part of the Bam complex.

Its subcellular location is the cell outer membrane. Part of the outer membrane protein assembly complex, which is involved in assembly and insertion of beta-barrel proteins into the outer membrane. This chain is Outer membrane protein assembly factor BamC, found in Vibrio cholerae serotype O1 (strain ATCC 39315 / El Tor Inaba N16961).